We begin with the raw amino-acid sequence, 405 residues long: Arginine biosynthesis bifunctional protein ArgJ (405 aa).

The substrate site is built by Thr152, Lys178, Thr189, Glu276, Asn400, and Thr405. The active-site Nucleophile is Thr189.

Belongs to the ArgJ family. In terms of assembly, heterotetramer of two alpha and two beta chains.

Its subcellular location is the cytoplasm. It carries out the reaction N(2)-acetyl-L-ornithine + L-glutamate = N-acetyl-L-glutamate + L-ornithine. The enzyme catalyses L-glutamate + acetyl-CoA = N-acetyl-L-glutamate + CoA + H(+). Its pathway is amino-acid biosynthesis; L-arginine biosynthesis; L-ornithine and N-acetyl-L-glutamate from L-glutamate and N(2)-acetyl-L-ornithine (cyclic): step 1/1. It functions in the pathway amino-acid biosynthesis; L-arginine biosynthesis; N(2)-acetyl-L-ornithine from L-glutamate: step 1/4. Catalyzes two activities which are involved in the cyclic version of arginine biosynthesis: the synthesis of N-acetylglutamate from glutamate and acetyl-CoA as the acetyl donor, and of ornithine by transacetylation between N(2)-acetylornithine and glutamate. This Pseudomonas aeruginosa (strain ATCC 15692 / DSM 22644 / CIP 104116 / JCM 14847 / LMG 12228 / 1C / PRS 101 / PAO1) protein is Arginine biosynthesis bifunctional protein ArgJ.